A 483-amino-acid polypeptide reads, in one-letter code: Fructose-like PTS system EIIBC component (483 aa).

The PTS EIIB type-2 domain occupies 1 to 105; the sequence is MESSLRIVAI…IDQIFSELPT (105 aa). C13 functions as the Phosphocysteine intermediate; for EIIB activity in the catalytic mechanism. Position 13 is a phosphocysteine; by EIIA (C13). Positions 128-475 constitute a PTS EIIC type-2 domain; it reads VMSHLMAGVS…LWLRRKAKAA (348 aa). 10 helical membrane passes run 132-152, 180-200, 204-224, 227-247, 264-284, 303-323, 344-364, 380-400, 402-422, and 442-462; these read LMAG…LVAL, IGYL…ASSI, PAFA…LLGT, GAGF…VFWF, LIPF…IGPV, MKFA…GGPI, AIVG…TFIA, IVVG…AAPL, MITA…AFGI, and VGSF…FIIV.

The protein localises to the cell inner membrane. The enzyme catalyses D-fructose(out) + N(pros)-phospho-L-histidyl-[protein] = D-fructose 1-phosphate(in) + L-histidyl-[protein]. Functionally, the phosphoenolpyruvate-dependent sugar phosphotransferase system (sugar PTS), a major carbohydrate active transport system, catalyzes the phosphorylation of incoming sugar substrates concomitantly with their translocation across the cell membrane. The enzyme II FrvAB PTS system is involved in fructose transport. In Escherichia coli (strain K12), this protein is Fructose-like PTS system EIIBC component.